Here is a 303-residue protein sequence, read N- to C-terminus: MATH domain and coiled-coil domain-containing protein At3g58250 (303 aa).

An MATH domain is found at 8–135 (KKKFSWVIKN…KGELKIVVEI (128 aa)). A coiled-coil region spans residues 231–287 (KLDWLKKKLDQVTQKKEKEAAGETRMHEIGEELKDLKLKCSDLEAQLDKEKADVLAA).

The protein is MATH domain and coiled-coil domain-containing protein At3g58250 of Arabidopsis thaliana (Mouse-ear cress).